A 106-amino-acid chain; its full sequence is Cell division protein FtsB (106 aa).

The Cytoplasmic segment spans residues 1–3 (MGK). The helical transmembrane segment at 4–21 (LTLLLLALLGWLQYSLWL) threads the bilayer. Residues 22–106 (GKNGVHDYVR…ASSSQNNLQK (85 aa)) lie on the Periplasmic side of the membrane. The stretch at 40 to 62 (QGSNAKLKARNDQLFAEIDDLNG) forms a coiled coil.

This sequence belongs to the FtsB family. In terms of assembly, part of a complex composed of FtsB, FtsL and FtsQ.

The protein localises to the cell inner membrane. In terms of biological role, essential cell division protein. May link together the upstream cell division proteins, which are predominantly cytoplasmic, with the downstream cell division proteins, which are predominantly periplasmic. The protein is Cell division protein FtsB of Serratia proteamaculans (strain 568).